The chain runs to 172 residues: uncharacterized protein (172 aa).

In terms of domain architecture, PfpI endopeptidase spans 3–171 (KKVAIILTNE…FNREIVNQLN (169 aa)).

It belongs to the peptidase C56 family.

This is an uncharacterized protein from Staphylococcus saprophyticus subsp. saprophyticus (strain ATCC 15305 / DSM 20229 / NCIMB 8711 / NCTC 7292 / S-41).